Here is a 138-residue protein sequence, read N- to C-terminus: Basic phospholipase A2 homolog Tbo-K49 (138 aa).

Positions 1 to 16 (MRTLWIMAVLLVGVEG) are cleaved as a signal peptide. 6 disulfides stabilise this stretch: Cys-42–Cys-131, Cys-44–Cys-60, Cys-59–Cys-111, Cys-65–Cys-138, Cys-66–Cys-104, and Cys-91–Cys-102. The tract at residues 121 to 133 (KKERINTKIFCKK) is important for membrane-damaging activities in eukaryotes and bacteria; heparin-binding.

In terms of assembly, monomer. As to expression, expressed by the venom gland.

It is found in the secreted. In terms of biological role, snake venom phospholipase A2 homolog that lacks catalytic activity. It induces local edema. Is myotoxic. A model of myotoxic mechanism has been proposed: an apo Lys49-PLA2 is activated by the entrance of a hydrophobic molecule (e.g. fatty acid) at the hydrophobic channel of the protein leading to a reorientation of a monomer. This reorientation causes a transition between 'inactive' to 'active' states, causing alignment of C-terminal and membrane-docking sites (MDoS) side-by-side and putting the membrane-disruption sites (MDiS) in the same plane, exposed to solvent and in a symmetric position for both monomers. The MDoS region stabilizes the toxin on membrane by the interaction of charged residues with phospholipid head groups. Subsequently, the MDiS region destabilizes the membrane with penetration of hydrophobic residues. This insertion causes a disorganization of the membrane, allowing an uncontrolled influx of ions (i.e. calcium and sodium), and eventually triggering irreversible intracellular alterations and cell death. The sequence is that of Basic phospholipase A2 homolog Tbo-K49 from Craspedocephalus borneensis (Borneo pit viper).